A 132-amino-acid chain; its full sequence is Small ribosomal subunit protein uS9 (132 aa).

It belongs to the universal ribosomal protein uS9 family.

In Halobacterium salinarum (strain ATCC 700922 / JCM 11081 / NRC-1) (Halobacterium halobium), this protein is Small ribosomal subunit protein uS9 (rps9).